Reading from the N-terminus, the 65-residue chain is Large ribosomal subunit protein bL35 (65 aa).

This sequence belongs to the bacterial ribosomal protein bL35 family.

The protein is Large ribosomal subunit protein bL35 of Aromatoleum aromaticum (strain DSM 19018 / LMG 30748 / EbN1) (Azoarcus sp. (strain EbN1)).